Reading from the N-terminus, the 370-residue chain is tRNA-specific 2-thiouridylase MnmA (370 aa).

ATP contacts are provided by residues 24-31 (AMSGGVDS) and Leu50. The Nucleophile role is filled by Cys118. Cys118 and Cys214 form a disulfide bridge. Gly142 is an ATP binding site. The segment at 164 to 166 (KDQ) is interaction with tRNA. Cys214 functions as the Cysteine persulfide intermediate in the catalytic mechanism.

It belongs to the MnmA/TRMU family.

The protein localises to the cytoplasm. It catalyses the reaction S-sulfanyl-L-cysteinyl-[protein] + uridine(34) in tRNA + AH2 + ATP = 2-thiouridine(34) in tRNA + L-cysteinyl-[protein] + A + AMP + diphosphate + H(+). In terms of biological role, catalyzes the 2-thiolation of uridine at the wobble position (U34) of tRNA, leading to the formation of s(2)U34. This chain is tRNA-specific 2-thiouridylase MnmA, found in Ehrlichia ruminantium (strain Gardel).